Here is a 191-residue protein sequence, read N- to C-terminus: Protein GrpE (191 aa).

Basic and acidic residues-rich tracts occupy residues 1 to 19 (MKDEHNQEHDHLSQKEPES) and 29 to 42 (QQGEEKQEASEKEC). The interval 1–42 (MKDEHNQEHDHLSQKEPESYQKACACKEQQGEEKQEASEKEC) is disordered.

It belongs to the GrpE family. As to quaternary structure, homodimer.

Its subcellular location is the cytoplasm. Participates actively in the response to hyperosmotic and heat shock by preventing the aggregation of stress-denatured proteins, in association with DnaK and GrpE. It is the nucleotide exchange factor for DnaK and may function as a thermosensor. Unfolded proteins bind initially to DnaJ; upon interaction with the DnaJ-bound protein, DnaK hydrolyzes its bound ATP, resulting in the formation of a stable complex. GrpE releases ADP from DnaK; ATP binding to DnaK triggers the release of the substrate protein, thus completing the reaction cycle. Several rounds of ATP-dependent interactions between DnaJ, DnaK and GrpE are required for fully efficient folding. The protein is Protein GrpE of Helicobacter pylori (strain HPAG1).